The chain runs to 445 residues: ATP-dependent protease ATPase subunit HslU (445 aa).

Residues I17, 59–64, D254, E319, and R391 contribute to the ATP site; that span reads GVGKTE.

It belongs to the ClpX chaperone family. HslU subfamily. As to quaternary structure, a double ring-shaped homohexamer of HslV is capped on each side by a ring-shaped HslU homohexamer. The assembly of the HslU/HslV complex is dependent on binding of ATP.

The protein localises to the cytoplasm. In terms of biological role, ATPase subunit of a proteasome-like degradation complex; this subunit has chaperone activity. The binding of ATP and its subsequent hydrolysis by HslU are essential for unfolding of protein substrates subsequently hydrolyzed by HslV. HslU recognizes the N-terminal part of its protein substrates and unfolds these before they are guided to HslV for hydrolysis. In Pseudomonas savastanoi pv. phaseolicola (strain 1448A / Race 6) (Pseudomonas syringae pv. phaseolicola (strain 1448A / Race 6)), this protein is ATP-dependent protease ATPase subunit HslU.